The chain runs to 147 residues: Small ribosomal subunit protein uS5 (147 aa).

One can recognise an S5 DRBM domain in the interval Phe9 to Val72.

Belongs to the universal ribosomal protein uS5 family. As to quaternary structure, part of the 30S ribosomal subunit. Contacts proteins S4 and S8.

In terms of biological role, with S4 and S12 plays an important role in translational accuracy. Located at the back of the 30S subunit body where it stabilizes the conformation of the head with respect to the body. The polypeptide is Small ribosomal subunit protein uS5 (Campylobacter fetus subsp. fetus (strain 82-40)).